The chain runs to 224 residues: Large ribosomal subunit protein uL4 (224 aa).

A disordered region spans residues 52–109; it reads AAARQGTHSTKTRGDVSGGGRKPYRQKGTGRARQGSTRAPQFTGGGVVHGPKPRDYSQ.

The protein belongs to the universal ribosomal protein uL4 family. As to quaternary structure, part of the 50S ribosomal subunit.

In terms of biological role, one of the primary rRNA binding proteins, this protein initially binds near the 5'-end of the 23S rRNA. It is important during the early stages of 50S assembly. It makes multiple contacts with different domains of the 23S rRNA in the assembled 50S subunit and ribosome. Forms part of the polypeptide exit tunnel. The polypeptide is Large ribosomal subunit protein uL4 (Mycobacterium marinum (strain ATCC BAA-535 / M)).